A 309-amino-acid polypeptide reads, in one-letter code: Taste receptor type 2 member 113 (309 aa).

Topologically, residues 1–10 (MVAVLQSTLP) are extracellular. Residues 11 to 31 (IIFSMEFIMGTLGNGFIFLIV) traverse the membrane as a helical segment. Residues 32–55 (CIDWVQRRKISLVDQIRTALAISR) lie on the Cytoplasmic side of the membrane. Residues 56 to 76 (IALIWLIFLDWWVSVHYPALH) traverse the membrane as a helical segment. Topologically, residues 77–80 (ETGK) are extracellular. A helical membrane pass occupies residues 81 to 101 (MLSTYLISWTVINHCNFWLTA). Residues 102-127 (NLSILYFLKIANFSNIIFLYLKFRSK) are Cytoplasmic-facing. The chain crosses the membrane as a helical span at residues 128–148 (NVVLVTLLVSLFFLFLNTVII). Residues 149 to 185 (KIFSDVCFDSVQRNVSQIFIMYNHEQICKFLSFTNPM) lie on the Extracellular side of the membrane. The N-linked (GlcNAc...) asparagine glycan is linked to Asn-162. The helical transmembrane segment at 186–206 (FTFIPFVMSTVMFSLLIFSLW) threads the bilayer. Over 207-229 (RHLKNMQHTAKGCRDISTTVHIR) the chain is Cytoplasmic. The helical transmembrane segment at 230-250 (ALQTIIVSVVLYTIFFLSFFV) threads the bilayer. Topologically, residues 251-262 (KVWSFVSPERYL) are extracellular. Residues 263 to 283 (IFLFVWALGNAVFSAHPFVMI) form a helical membrane-spanning segment. At 284–309 (LVNRRLRLASLSLIFWLWYRFKNIEV) the chain is on the cytoplasmic side.

It belongs to the G-protein coupled receptor T2R family.

It localises to the membrane. Putative taste receptor which may play a role in the perception of bitterness. This is Taste receptor type 2 member 113 from Mus musculus (Mouse).